We begin with the raw amino-acid sequence, 379 residues long: Cytochrome b (379 aa).

A run of 4 helical transmembrane segments spans residues 33–53 (FGSL…FLAM), 77–98 (WTIR…FIHV), 113–133 (WNVG…GYVL), and 178–198 (FFAL…IHLL). Heme b-binding residues include H83 and H97. H182 and H196 together coordinate heme b. H201 lines the a ubiquinone pocket. 4 consecutive transmembrane segments (helical) span residues 226-246 (TKDF…TLFY), 288-308 (LGGV…PLLQ), 320-340 (LSQF…WIGG), and 347-367 (FITI…LIMP).

This sequence belongs to the cytochrome b family. As to quaternary structure, the cytochrome bc1 complex contains 11 subunits: 3 respiratory subunits (MT-CYB, CYC1 and UQCRFS1), 2 core proteins (UQCRC1 and UQCRC2) and 6 low-molecular weight proteins (UQCRH/QCR6, UQCRB/QCR7, UQCRQ/QCR8, UQCR10/QCR9, UQCR11/QCR10 and a cleavage product of UQCRFS1). This cytochrome bc1 complex then forms a dimer. It depends on heme b as a cofactor.

The protein localises to the mitochondrion inner membrane. Functionally, component of the ubiquinol-cytochrome c reductase complex (complex III or cytochrome b-c1 complex) that is part of the mitochondrial respiratory chain. The b-c1 complex mediates electron transfer from ubiquinol to cytochrome c. Contributes to the generation of a proton gradient across the mitochondrial membrane that is then used for ATP synthesis. This is Cytochrome b (MT-CYB) from Lepilemur edwardsi (Milne-Edwards's sportive lemur).